Reading from the N-terminus, the 160-residue chain is Cytochrome b6-f complex subunit 4 (160 aa).

Helical transmembrane passes span 36–56, 95–115, and 131–151; these read LLYIFPVVILGTIACTVGLAV, LLGVLLMAAVPAGLLTVPFLE, and TVFLIGTVVALWLGIGAALPI.

Belongs to the cytochrome b family. PetD subfamily. As to quaternary structure, the 4 large subunits of the cytochrome b6-f complex are cytochrome b6, subunit IV (17 kDa polypeptide, petD), cytochrome f and the Rieske protein, while the 4 small subunits are petG, petL, petM and petN. The complex functions as a dimer.

The protein resides in the plastid. The protein localises to the chloroplast thylakoid membrane. Its function is as follows. Component of the cytochrome b6-f complex, which mediates electron transfer between photosystem II (PSII) and photosystem I (PSI), cyclic electron flow around PSI, and state transitions. This chain is Cytochrome b6-f complex subunit 4, found in Marchantia polymorpha (Common liverwort).